The sequence spans 1486 residues: Chromosome partition protein MukB (1486 aa).

34 to 41 (GGNGAGKS) serves as a coordination point for ATP. Coiled coils occupy residues 326–418 (LEAD…QYNQ), 444–480 (LETFQAKELEATEKMLSLEQKMSMAQTAHSQFEQAYQ), and 509–603 (RHLA…RAPV). Residues 666 to 783 (PGGSEDQRLN…EVPLFGRAAR (118 aa)) are flexible hinge. Coiled coils occupy residues 835-923 (EAEI…AKLE), 977-1115 (EMLS…TAKA), and 1209-1266 (VEAI…QNVS).

It belongs to the SMC family. MukB subfamily. In terms of assembly, homodimerization via its hinge domain. Binds to DNA via its C-terminal region. Interacts, and probably forms a ternary complex, with MukE and MukF via its C-terminal region. The complex formation is stimulated by calcium or magnesium. Interacts with tubulin-related protein FtsZ.

The protein localises to the cytoplasm. Its subcellular location is the nucleoid. In terms of biological role, plays a central role in chromosome condensation, segregation and cell cycle progression. Functions as a homodimer, which is essential for chromosome partition. Involved in negative DNA supercoiling in vivo, and by this means organize and compact chromosomes. May achieve or facilitate chromosome segregation by condensation DNA from both sides of a centrally located replisome during cell division. The polypeptide is Chromosome partition protein MukB (Escherichia coli O81 (strain ED1a)).